The chain runs to 336 residues: Ferredoxin--NADP reductase (336 aa).

FAD contacts are provided by T18, E37, Q45, Y50, V92, F127, D290, and S331.

Belongs to the ferredoxin--NADP reductase type 2 family. Homodimer. Requires FAD as cofactor.

The catalysed reaction is 2 reduced [2Fe-2S]-[ferredoxin] + NADP(+) + H(+) = 2 oxidized [2Fe-2S]-[ferredoxin] + NADPH. In Symbiobacterium thermophilum (strain DSM 24528 / JCM 14929 / IAM 14863 / T), this protein is Ferredoxin--NADP reductase.